We begin with the raw amino-acid sequence, 128 residues long: Large-conductance mechanosensitive channel (128 aa).

The next 2 helical transmembrane spans lie at 10-30 (FAMRGNVVDMAVGVIIGSAFG) and 76-96 (GLFIQNVIDFIIIAFAIFMMI).

It belongs to the MscL family. Homopentamer.

It is found in the cell inner membrane. In terms of biological role, channel that opens in response to stretch forces in the membrane lipid bilayer. May participate in the regulation of osmotic pressure changes within the cell. This is Large-conductance mechanosensitive channel from Haemophilus influenzae (strain PittEE).